The following is a 116-amino-acid chain: Nucleoid-associated protein P9515_00191 (116 aa).

The segment covering 89–98 (STTTMKERMN) has biased composition (basic and acidic residues). A disordered region spans residues 89-116 (STTTMKERMNDLTGGLNLNLPGLDNNDS). Residues 99 to 116 (DLTGGLNLNLPGLDNNDS) show a composition bias toward low complexity.

The protein belongs to the YbaB/EbfC family. As to quaternary structure, homodimer.

It localises to the cytoplasm. Its subcellular location is the nucleoid. Functionally, binds to DNA and alters its conformation. May be involved in regulation of gene expression, nucleoid organization and DNA protection. In Prochlorococcus marinus (strain MIT 9515), this protein is Nucleoid-associated protein P9515_00191.